The sequence spans 415 residues: Phosphoglycerate kinase (415 aa).

Val22, Asp23, Phe24, Asn25, Gln37, Arg38, Ser61, His62, Gly64, Leu120, Arg121, His168, and Arg169 together coordinate (2R)-3-phosphoglycerate. Position 212 (Gly212) interacts with ADP. A CDP-binding site is contributed by Gly212. 2 residues coordinate AMP: Ala213 and Lys214. ATP is bound at residue Ala213. Ala213 is a Mg(2+) binding site. Position 217 (Asp217) interacts with CDP. Residue Asp217 coordinates Mg(2+). Lys218 is an AMP binding site. Lys218 serves as a coordination point for ATP. Gly236 serves as a coordination point for ADP. Gly236 lines the CDP pocket. AMP-binding residues include Gly237 and Gly311. ATP-binding residues include Gly237 and Gly311. Positions 336 and 341 each coordinate CDP. Phe341 contributes to the ADP binding site. Glu342 provides a ligand contact to AMP. Residues Glu342, Asp373, and Thr374 each coordinate ATP. Asp373 is a Mg(2+) binding site.

The protein belongs to the phosphoglycerate kinase family. As to quaternary structure, monomer. It depends on Mg(2+) as a cofactor.

The protein localises to the cytoplasm. The enzyme catalyses (2R)-3-phosphoglycerate + ATP = (2R)-3-phospho-glyceroyl phosphate + ADP. Its pathway is carbohydrate degradation; glycolysis; pyruvate from D-glyceraldehyde 3-phosphate: step 2/5. This chain is Phosphoglycerate kinase (PGK), found in Opisthorchis sinensis (Clonorchis sinensis).